Consider the following 153-residue polypeptide: ATP synthase subunit b' (153 aa).

The helical transmembrane segment at 20 to 40 (TLPLMAVQVVLLTFILNALFF) threads the bilayer.

The protein belongs to the ATPase B chain family. In terms of assembly, F-type ATPases have 2 components, F(1) - the catalytic core - and F(0) - the membrane proton channel. F(1) has five subunits: alpha(3), beta(3), gamma(1), delta(1), epsilon(1). F(0) has four main subunits: a(1), b(1), b'(1) and c(10-14). The alpha and beta chains form an alternating ring which encloses part of the gamma chain. F(1) is attached to F(0) by a central stalk formed by the gamma and epsilon chains, while a peripheral stalk is formed by the delta, b and b' chains.

Its subcellular location is the cellular thylakoid membrane. In terms of biological role, f(1)F(0) ATP synthase produces ATP from ADP in the presence of a proton or sodium gradient. F-type ATPases consist of two structural domains, F(1) containing the extramembraneous catalytic core and F(0) containing the membrane proton channel, linked together by a central stalk and a peripheral stalk. During catalysis, ATP synthesis in the catalytic domain of F(1) is coupled via a rotary mechanism of the central stalk subunits to proton translocation. Functionally, component of the F(0) channel, it forms part of the peripheral stalk, linking F(1) to F(0). The b'-subunit is a diverged and duplicated form of b found in plants and photosynthetic bacteria. The polypeptide is ATP synthase subunit b' (Prochlorococcus marinus (strain NATL1A)).